The primary structure comprises 1192 residues: DNA topoisomerase 2 (1192 aa).

ATP is bound by residues Asn-64, Asn-95, and Gly-142–Lys-149. Positions 438, 539, and 541 each coordinate Mg(2+). One can recognise a Topo IIA-type catalytic domain in the interval Ile-707 to Ile-1174. Tyr-800 (O-(5'-phospho-DNA)-tyrosine intermediate) is an active-site residue.

The protein belongs to the type II topoisomerase family. Mg(2+) is required as a cofactor. The cofactor is Mn(2+). It depends on Ca(2+) as a cofactor.

The protein resides in the host cytoplasm. It carries out the reaction ATP-dependent breakage, passage and rejoining of double-stranded DNA.. In terms of biological role, type II topoisomerase. Processively relaxes supercoiled DNA. Displays DNA-supercoiling activity only when associated with the viral histone-like protein. The sequence is that of DNA topoisomerase 2 from African swine fever virus (isolate Pig/Kenya/KEN-50/1950) (ASFV).